The following is a 112-amino-acid chain: Nucleoid-associated protein Pfl01_1806 (112 aa).

The protein belongs to the YbaB/EbfC family. Homodimer.

The protein localises to the cytoplasm. The protein resides in the nucleoid. Its function is as follows. Binds to DNA and alters its conformation. May be involved in regulation of gene expression, nucleoid organization and DNA protection. The protein is Nucleoid-associated protein Pfl01_1806 of Pseudomonas fluorescens (strain Pf0-1).